Reading from the N-terminus, the 593-residue chain is Acetyl-coenzyme A transferase nodX (593 aa).

Positions Asp-572–Asp-593 are disordered. Over residues Phe-580–Asp-593 the composition is skewed to gly residues.

The protein belongs to the CoA-transferase III family.

It participates in secondary metabolite biosynthesis. Acetyl-coenzyme A transferase; part of the gene cluster that mediates the biosynthesis of the indole diterpenes nodulisporic acids (NA). Nodulisporic acid A (NAA) and its chemically modified derivatives are of particular significance because of their highly potent insecticidal activity against blood-feeding arthropods and lack of observable adverse effects on mammals, in particular the tremogenicity associated with the paspaline-derived IDTs is not observed. The geranylgeranyl diphosphate (GGPP) synthase ggs1, localized outside of the cluster, is proposed to catalyze the first step in nodulisporic acid biosynthesis via conversion of farnesyl pyrophosphate and isopentyl pyrophosphate into geranylgeranyl pyrophosphate (GGPP). Condensation of indole-3-glycerol phosphate with GGPP by the prenyl transferase nodC then forms 3-geranylgeranylindole (3-GGI). Epoxidation by the FAD-dependent monooxygenase nodM leads to a single-epoxidized-GGI that is substrate of the terpene cyclase nodB for cyclization to yield emindole SB. The terminal methyl carbon, C28, of emindole SB is then oxidized by the cytochrome P450 monooxygenase nodW to produce nodulisporic acid F (NAF), the pentacyclic core of NAA. NAF is converted to nodulisporic acid E (NAE) via prenylation. This step is probably performed by one of the indole diterpene prenyltransferases nodD1 or nodD2. Several oxidation steps performed by the FAD-linked oxidoreductase nodO and one of the cytochrome P450 monooxygenase nodR, nodX or nodZ further convert NAE to nodulisporic acid D (NAD). NAD is substrate of cytochrome P450 monooxygenase nodJ to produce the precursor of nodulisporic acid C (NAC), converted to NAC by one of the indole diterpene prenyltransferases nodD1 or nodD2. The FAD-dependent monooxygenase nodY2 then oxidizes NAC to nodulisporic acid B (NAB). Finally NAB is converted to NAA by one of the cytochrome P450 monooxygenases nodR, nodX or nodZ. In Hypoxylon pulicicidum, this protein is Acetyl-coenzyme A transferase nodX.